The following is a 447-amino-acid chain: GTPase Der (447 aa).

EngA-type G domains lie at 3–167 (PVVA…NLPD) and 181–354 (IKLA…KSAT). GTP is bound by residues 9–16 (GRPNVGKS), 56–60 (DTGGF), 119–122 (NKAE), 187–194 (GRPNVGKS), 234–238 (DTAGL), and 299–302 (NKWD). Residues 355 to 439 (RKMSTPVLTR…PLRIQFKSSQ (85 aa)) form the KH-like domain.

This sequence belongs to the TRAFAC class TrmE-Era-EngA-EngB-Septin-like GTPase superfamily. EngA (Der) GTPase family. As to quaternary structure, associates with the 50S ribosomal subunit.

Functionally, GTPase that plays an essential role in the late steps of ribosome biogenesis. The polypeptide is GTPase Der (Variovorax paradoxus (strain S110)).